A 555-amino-acid chain; its full sequence is Vetispiradiene synthase 1 (555 aa).

Aspartate 308, aspartate 312, aspartate 451, threonine 455, and glutamate 459 together coordinate Mg(2+). The short motif at 308-312 is the DDXXD motif element; that stretch reads DDTFD.

It belongs to the terpene synthase family. Tpsa subfamily. Mg(2+) is required as a cofactor.

Its subcellular location is the cytoplasm. The catalysed reaction is (2E,6E)-farnesyl diphosphate = (-)-vetispiradiene + diphosphate. It functions in the pathway secondary metabolite biosynthesis; terpenoid biosynthesis. Sesquiterpene synthase that catalyzes the formation of vetispiradiene from trans,trans-farnesyl diphosphate. The initial internal cyclization produces the monocyclic intermediate germacrene A. The chain is Vetispiradiene synthase 1 from Hyoscyamus muticus (Egyptian henbane).